The primary structure comprises 118 residues: Large ribosomal subunit protein bL17 (118 aa).

It belongs to the bacterial ribosomal protein bL17 family. In terms of assembly, part of the 50S ribosomal subunit. Contacts protein L32.

The protein is Large ribosomal subunit protein bL17 of Campylobacter hominis (strain ATCC BAA-381 / DSM 21671 / CCUG 45161 / LMG 19568 / NCTC 13146 / CH001A).